Reading from the N-terminus, the 536-residue chain is Multicopper oxidase terE (536 aa).

Residues 1 to 21 form a disordered region; it reads MHWHGLSQSTAPFSDGSPQAS. Plastocyanin-like domains follow at residues 1–67, 79–238, and 354–488; these read MHWH…VEEK, ERIL…LSYN, and TVQK…VWMM. Cu cation contacts are provided by histidine 2, histidine 4, histidine 48, and histidine 50. Histidine 397 lines the Cu cation pocket.

It belongs to the multicopper oxidase family.

The protein operates within secondary metabolite biosynthesis. In terms of biological role, multicopper oxidase; part of the gene cluster that mediates the biosynthesis of terrein, a fungal metabolite with ecological, antimicrobial, antiproliferative, and antioxidative activities. The first step in the pathway is performed by the polyketide synthase terA that produces 4-hydroxy-6-methylpyranon (4-HMP), orsellinic acid (OA), and 2,3-dehydro-6-hydroxymellein (2,3-dehydro-6-HM) by condensing acetyl-CoA with two, three, or four malonyl-CoA units, respectively. 4-HMP and OA are not pathway intermediates, but are rather shunt or side products. 2,3-dehydro-6-HM is further converted to 6-hydroxymellein (6-HM) by the 6-hydroxymellein synthase terB. The monooxygenases terC and terD, the multicopper oxidase terE and the Kelch-like protein terF are then involved in the transformation of 6-HM to terrein. Even if they are co-regulated with the other terrein cluster genes, terH and terI seem to be dispensable for terrein production; whereas one or both of the 2 transporters terG and terJ are probably required for efficient secretion of metabolites. The polypeptide is Multicopper oxidase terE (Aspergillus terreus (strain NIH 2624 / FGSC A1156)).